The chain runs to 103 residues: Small ribosomal subunit protein uS10 (103 aa).

This sequence belongs to the universal ribosomal protein uS10 family. As to quaternary structure, part of the 30S ribosomal subunit.

Functionally, involved in the binding of tRNA to the ribosomes. This Magnetococcus marinus (strain ATCC BAA-1437 / JCM 17883 / MC-1) protein is Small ribosomal subunit protein uS10.